Consider the following 1315-residue polypeptide: Serine/threonine-protein kinase 36 (1315 aa).

The region spanning 4–254 is the Protein kinase domain; the sequence is YHVLEMIGEG…WPDLLYHPFI (251 aa). ATP contacts are provided by residues 10–18 and lysine 33; that span reads IGEGSFGRV. The Proton acceptor role is filled by aspartate 125. Disordered stretches follow at residues 312-345 and 365-405; these read EAMQ…PRLG and SWAE…RSTD. Positions 379-397 are enriched in basic and acidic residues; it reads RENRTTPDCERAFPEERPE.

The protein belongs to the protein kinase superfamily. Ser/Thr protein kinase family. As to quaternary structure, interacts with SPAG16 and KIF27. The cofactor is Mg(2+).

It localises to the cytoplasm. The protein resides in the nucleus. The protein localises to the cytoskeleton. It is found in the cilium axoneme. The enzyme catalyses L-seryl-[protein] + ATP = O-phospho-L-seryl-[protein] + ADP + H(+). It catalyses the reaction L-threonyl-[protein] + ATP = O-phospho-L-threonyl-[protein] + ADP + H(+). In terms of biological role, serine/threonine protein kinase which plays an important role in the sonic hedgehog (Shh) pathway by regulating the activity of GLI transcription factors. Controls the activity of the transcriptional regulators GLI1, GLI2 and GLI3 by opposing the effect of SUFU and promoting their nuclear localization. GLI2 requires an additional function of STK36 to become transcriptionally active, but the enzyme does not need to possess an active kinase catalytic site for this to occur. Required for postnatal development, possibly by regulating the homeostasis of cerebral spinal fluid or ciliary function. Essential for construction of the central pair apparatus of motile cilia. In Pongo abelii (Sumatran orangutan), this protein is Serine/threonine-protein kinase 36.